A 497-amino-acid chain; its full sequence is Serine hydroxymethyltransferase (497 aa).

Residues L176 and 180-182 each bind (6S)-5,6,7,8-tetrahydrofolate; that span reads GHL. K289 bears the N6-(pyridoxal phosphate)lysine mark.

Belongs to the SHMT family. In terms of assembly, homodimer. The cofactor is pyridoxal 5'-phosphate.

Its subcellular location is the cytoplasm. It carries out the reaction (6R)-5,10-methylene-5,6,7,8-tetrahydrofolate + glycine + H2O = (6S)-5,6,7,8-tetrahydrofolate + L-serine. Its pathway is one-carbon metabolism; tetrahydrofolate interconversion. It participates in amino-acid biosynthesis; glycine biosynthesis; glycine from L-serine: step 1/1. Functionally, catalyzes the reversible interconversion of serine and glycine with tetrahydrofolate (THF) serving as the one-carbon carrier. This reaction serves as the major source of one-carbon groups required for the biosynthesis of purines, thymidylate, methionine, and other important biomolecules. Also exhibits THF-independent aldolase activity toward beta-hydroxyamino acids, producing glycine and aldehydes, via a retro-aldol mechanism. The protein is Serine hydroxymethyltransferase of Chlamydia felis (strain Fe/C-56) (Chlamydophila felis).